The chain runs to 306 residues: D-alanine--D-alanine ligase (306 aa).

In terms of domain architecture, ATP-grasp spans 104–303; that stretch reads KMLWKAFGLP…FEQLVVKILE (200 aa). Residue 134 to 189 participates in ATP binding; it reads VAKLGLPLMVKPSLEGSSVGLTKVKAVEELKSAVEYALKFDNTILIEEWLAGDELT. Asp257, Glu270, and Asn272 together coordinate Mg(2+).

This sequence belongs to the D-alanine--D-alanine ligase family. It depends on Mg(2+) as a cofactor. Mn(2+) serves as cofactor.

The protein localises to the cytoplasm. It catalyses the reaction 2 D-alanine + ATP = D-alanyl-D-alanine + ADP + phosphate + H(+). Its pathway is cell wall biogenesis; peptidoglycan biosynthesis. Cell wall formation. This chain is D-alanine--D-alanine ligase, found in Haemophilus influenzae (strain 86-028NP).